We begin with the raw amino-acid sequence, 393 residues long: NAD(P)H-quinone oxidoreductase subunit H, chloroplastic (393 aa).

It belongs to the complex I 49 kDa subunit family. NDH is composed of at least 16 different subunits, 5 of which are encoded in the nucleus.

Its subcellular location is the plastid. The protein resides in the chloroplast thylakoid membrane. It carries out the reaction a plastoquinone + NADH + (n+1) H(+)(in) = a plastoquinol + NAD(+) + n H(+)(out). The enzyme catalyses a plastoquinone + NADPH + (n+1) H(+)(in) = a plastoquinol + NADP(+) + n H(+)(out). NDH shuttles electrons from NAD(P)H:plastoquinone, via FMN and iron-sulfur (Fe-S) centers, to quinones in the photosynthetic chain and possibly in a chloroplast respiratory chain. The immediate electron acceptor for the enzyme in this species is believed to be plastoquinone. Couples the redox reaction to proton translocation, and thus conserves the redox energy in a proton gradient. The polypeptide is NAD(P)H-quinone oxidoreductase subunit H, chloroplastic (Brachypodium distachyon (Purple false brome)).